Reading from the N-terminus, the 470-residue chain is Solute carrier family 7 member 13 (470 aa).

Over 1 to 11 (MDRGEKIQLKR) the chain is Cytoplasmic. Residues 12 to 32 (VFGYWWGTSFLLINIIGAGIF) traverse the membrane as a helical segment. Topologically, residues 33–45 (VSPKGVLAYSCMN) are extracellular. A helical transmembrane segment spans residues 46–66 (VGVSLCVWAGCAILAMTSTLC). Residues 67–87 (SAEISISFPCSGAQYYFLKRY) are Cytoplasmic-facing. A helical membrane pass occupies residues 88–108 (FGSTVAFLNLWTSLFLGSGVV). At 109 to 128 (AGQALLLAEYSIQPFFPSCS) the chain is on the extracellular side. A helical transmembrane segment spans residues 129-149 (VPKLPKKCLALAMLWIVGILT). Residues 150–162 (SRGVKEVTWLQIA) lie on the Cytoplasmic side of the membrane. The helical transmembrane segment at 163–183 (SSVLKVSILSFISLTGVVFLI) threads the bilayer. The Extracellular segment spans residues 184–206 (RGKKENVERFQNAFDAELPDISH). A helical transmembrane segment spans residues 207–227 (LIQAIFQGYFAYSGGACFTLI). At 228 to 240 (AGELKKPRTTIPK) the chain is on the cytoplasmic side. Residues 241-261 (CIFTALPLVTVVYLLVNISYL) traverse the membrane as a helical segment. The Extracellular segment spans residues 262-287 (TVLTPREILSSDAVAITWADRAFPSL). Residues 288–308 (AWIMPFAISTSLFSNLLISIF) form a helical membrane-spanning segment. Over 309–336 (KSSRPIYLASQEGQLPLLFNTLNSHSSP) the chain is Cytoplasmic. The chain crosses the membrane as a helical span at residues 337-357 (FTAVLLLVTLGSLAIILTSLI). Aspartate 358 is a topological domain (extracellular). A helical transmembrane segment spans residues 359 to 379 (LINYIFFTGSLWSILLMIGIL). Topologically, residues 380–393 (RRRYQEPNLSIPYK) are cytoplasmic. A helical transmembrane segment spans residues 394 to 414 (VFLSFPLATIVIDVGLVVIPL). Residues 415-421 (VKSPNVH) lie on the Extracellular side of the membrane. A helical transmembrane segment spans residues 422–442 (YVYVLLLVLSGLLFYIPLIHF). Over 443–470 (KIRLAWFEKMTCYLQLLFNICLPDVSEE) the chain is Cytoplasmic.

Belongs to the amino acid-polyamine-organocation (APC) superfamily. In terms of assembly, disulfide-linked heterodimer composed of the catalytic light subunit SLC7A13 and the heavy subunit SLC3A1. In terms of tissue distribution, expressed in the kidney.

Its subcellular location is the apical cell membrane. It catalyses the reaction L-cystine(out) + L-aspartate(in) = L-cystine(in) + L-aspartate(out). The catalysed reaction is L-cystine(out) = L-cystine(in). It carries out the reaction L-aspartate(in) + L-glutamate(out) = L-aspartate(out) + L-glutamate(in). The enzyme catalyses L-aspartate(in) + L-glutamine(out) = L-aspartate(out) + L-glutamine(in). It catalyses the reaction L-aspartate(in) + L-methionine(out) = L-aspartate(out) + L-methionine(in). The catalysed reaction is L-leucine(out) + L-aspartate(in) = L-leucine(in) + L-aspartate(out). It carries out the reaction L-valine(out) + L-aspartate(in) = L-valine(in) + L-aspartate(out). The enzyme catalyses L-aspartate(in) + L-phenylalanine(out) = L-aspartate(out) + L-phenylalanine(in). It catalyses the reaction L-tyrosine(out) + L-aspartate(in) = L-tyrosine(in) + L-aspartate(out). The catalysed reaction is L-tryptophan(out) + L-aspartate(in) = L-tryptophan(in) + L-aspartate(out). In terms of biological role, associates with SLC3A1/rBAT to form a functional heterodimeric complex that transports anionic and neutral amino acids across the apical plasma membrane of renal epithelium. Preferentially mediates exchange transport, but can also operate via facilitated diffusion. May act as a major transporter for L-cystine in late proximal tubules, ensuring its reabsorption from the luminal fluid in exchange for cytosolic L-glutamate or L-aspartate. The protein is Solute carrier family 7 member 13 (SLC7A13) of Homo sapiens (Human).